A 178-amino-acid polypeptide reads, in one-letter code: MIKSTGALLLFAALSAGQAIASDVAFRGNLLDRPCHVSGDSLNKHVVFKTRASRDFWYPPGRSPTESFVIRLENCHATAVGKIVTLTFKGTEEAALPGHLKVTGVNAGRLGIALLDTDGSSLLKPGTSHNKGQGEKVTGNSLELPFGAYVVATPEALRTKSVVPGDYEATATFELTYR.

A signal peptide spans 1 to 21; it reads MIKSTGALLLFAALSAGQAIA.

Its subcellular location is the secreted. The protein resides in the fimbrium. Adapter that links the pilus rod to the base of the tip fibrillum. Regulates the length of the tip fibrillum and joins it to the pilus rod. Pili are polar filaments radiating from the surface of the bacterium to a length of 0.5-1.5 micrometers and numbering 100-300 per cell, and enable bacteria to colonize the epithelium of specific host organs. The chain is Fimbrial adapter PapK (papK) from Escherichia coli O6:H1 (strain CFT073 / ATCC 700928 / UPEC).